The chain runs to 183 residues: tRNA-splicing endonuclease (183 aa).

Active-site residues include Tyr120, His128, and Lys159.

Belongs to the tRNA-intron endonuclease family. Archaeal short subfamily. As to quaternary structure, homotetramer; although the tetramer contains four active sites, only two participate in the cleavage. Therefore, it should be considered as a dimer of dimers.

It carries out the reaction pretRNA = a 3'-half-tRNA molecule with a 5'-OH end + a 5'-half-tRNA molecule with a 2',3'-cyclic phosphate end + an intron with a 2',3'-cyclic phosphate and a 5'-hydroxyl terminus.. Endonuclease that removes tRNA introns. Cleaves pre-tRNA at the 5'- and 3'-splice sites to release the intron. The products are an intron and two tRNA half-molecules bearing 2',3' cyclic phosphate and 5'-OH termini. Recognizes a pseudosymmetric substrate in which 2 bulged loops of 3 bases are separated by a stem of 4 bp. This is tRNA-splicing endonuclease from Pyrobaculum islandicum (strain DSM 4184 / JCM 9189 / GEO3).